Reading from the N-terminus, the 420-residue chain is Probable glucuronosyltransferase Os04g0398600 (420 aa).

Over 1-4 (MGSR) the chain is Cytoplasmic. The chain crosses the membrane as a helical; Signal-anchor for type II membrane protein span at residues 5–25 (TVGWWLLAAAVVLAAAAADSG). The Lumenal portion of the chain corresponds to 26 to 420 (EAERAAEQHS…AGPVGDLKAW (395 aa)). N147 and N408 each carry an N-linked (GlcNAc...) asparagine glycan.

This sequence belongs to the glycosyltransferase 47 family.

It is found in the golgi apparatus membrane. In terms of biological role, involved in the synthesis of glucuronoxylan hemicellulose in secondary cell walls. This Oryza sativa subsp. japonica (Rice) protein is Probable glucuronosyltransferase Os04g0398600.